A 156-amino-acid polypeptide reads, in one-letter code: MILPDHKIRKEILIEPFNEKSLQPAGYDLRVGKEAMVNGKFINVEEEGKLVIPPKGHALILTLERVKLPDDVMGDMRLRSTFAREGLLGSFAWVDPGWDGNLTLAFFNSSEEEVILHYEERFVQIAFHRLEEPSKNPYRGIYQGSQHLKLSKRKIR.

DCTP is bound by residues Arg-79 to Arg-84, Asp-95, Gln-124, and Tyr-138.

Belongs to the dCTP deaminase family. Homotrimer.

The catalysed reaction is dCTP + H2O + H(+) = dUTP + NH4(+). The protein operates within pyrimidine metabolism; dUMP biosynthesis; dUMP from dCTP (dUTP route): step 1/2. Functionally, catalyzes the deamination of dCTP to dUTP. The protein is dCTP deaminase of Thermococcus sibiricus (strain DSM 12597 / MM 739).